The chain runs to 354 residues: Uroporphyrinogen decarboxylase (354 aa).

Substrate contacts are provided by residues 27 to 31 (RQAGR), Phe46, Asp77, Tyr154, Thr209, and His327.

Belongs to the uroporphyrinogen decarboxylase family. As to quaternary structure, homodimer.

The protein localises to the cytoplasm. It catalyses the reaction uroporphyrinogen III + 4 H(+) = coproporphyrinogen III + 4 CO2. The protein operates within porphyrin-containing compound metabolism; protoporphyrin-IX biosynthesis; coproporphyrinogen-III from 5-aminolevulinate: step 4/4. Catalyzes the decarboxylation of four acetate groups of uroporphyrinogen-III to yield coproporphyrinogen-III. This Photorhabdus laumondii subsp. laumondii (strain DSM 15139 / CIP 105565 / TT01) (Photorhabdus luminescens subsp. laumondii) protein is Uroporphyrinogen decarboxylase.